We begin with the raw amino-acid sequence, 447 residues long: N-succinylarginine dihydrolase (447 aa).

Residues 19-28 (AGLSFGNEAS), N110, and 137-138 (HR) each bind substrate. E174 is an active-site residue. R212 serves as a coordination point for substrate. H248 is an active-site residue. Substrate contacts are provided by D250 and N359. Residue C365 is the Nucleophile of the active site.

The protein belongs to the succinylarginine dihydrolase family. As to quaternary structure, homodimer.

It catalyses the reaction N(2)-succinyl-L-arginine + 2 H2O + 2 H(+) = N(2)-succinyl-L-ornithine + 2 NH4(+) + CO2. It functions in the pathway amino-acid degradation; L-arginine degradation via AST pathway; L-glutamate and succinate from L-arginine: step 2/5. Catalyzes the hydrolysis of N(2)-succinylarginine into N(2)-succinylornithine, ammonia and CO(2). In Escherichia coli O8 (strain IAI1), this protein is N-succinylarginine dihydrolase.